The sequence spans 438 residues: Cell division cycle-associated 7-like protein (438 aa).

Residues 9 to 33 carry the Integrase domain-binding motif 1 (IBM1) motif; the sequence is IPKEVADIFNAPSDDEEFVGFQDDV. Ser21 bears the Phosphoserine mark. Residues 55 to 114 are PSIP1-binding; it reads ACLHSKYFTEELRRIFKEDTDSDNEDFEGFTESELNIGSNPELIESELSDGDKTHPMMSD. The short motif at 62-88 is the Integrase domain-binding motif 2 (IBM2) element; that stretch reads FTEELRRIFKEDTDSDNEDFEGFTESE. Positions 72 to 199 are disordered; the sequence is EDTDSDNEDF…ESRAESQETS (128 aa). Thr74 carries the phosphothreonine modification. The span at 74–85 shows a compositional bias: acidic residues; that stretch reads TDSDNEDFEGFT. Ser76 bears the Phosphoserine mark. Thr85 carries the post-translational modification Phosphothreonine. 7 positions are modified to phosphoserine: Ser100, Ser103, Ser113, Ser135, Ser136, Ser183, and Ser185. Acidic residues predominate over residues 113–123; the sequence is SDEEDDDDEEE. The span at 166–183 shows a compositional bias: basic and acidic residues; that stretch reads TDLRREKSCRQPKEKEDS. The tract at residues 201–223 is MYC-binding; it reads ALLKRAMNIKENKAMLAQLLAEL. Residues Lys210 and Lys213 each participate in a glycyl lysine isopeptide (Lys-Gly) (interchain with G-Cter in SUMO2) cross-link. Ser249 is modified (phosphoserine).

As to quaternary structure, interacts with MYC. Interacts (via IBM motifs) with PSIP1 (via IBD domain); phosphorylation increases its affinity for PSIP1. Phosphorylation increases its interaction with PSIP1.

Its subcellular location is the cytoplasm. It is found in the nucleus. Plays a role in transcriptional regulation as a repressor that inhibits monoamine oxidase A (MAOA) activity and gene expression by binding to the promoter. Plays an important oncogenic role in mediating the full transforming effect of MYC in medulloblastoma cells. Involved in apoptotic signaling pathways; May act downstream of P38-kinase and BCL-2, but upstream of CASP3/caspase-3 as well as CCND1/cyclin D1 and E2F1. The chain is Cell division cycle-associated 7-like protein (Cdca7l) from Rattus norvegicus (Rat).